Here is a 435-residue protein sequence, read N- to C-terminus: uncharacterized protein (435 aa).

Helical transmembrane passes span 9 to 29 (IIVLFGSFAIILAVGVPITFA), 57 to 77 (VGLDGFTLLAIPFFVLAGNIM), 110 to 130 (TLFGAISGSAVASAAAVGGIM), 146 to 166 (AINVASAPIGLMIPPSNVLIV), 176 to 196 (VAALFLAGYLPGILTALALMT), 226 to 246 (LPSLLLIFIIIGGIIGGVFTP), 280 to 300 (VVTSSIVLLLVGCSMGMSWAM), 321 to 341 (WVILLIINLILLFVGTFMDIT), 343 to 363 (AILIFTPIFLPIAQHLGIDPV), 367 to 387 (IIMVFNLTIGLCTPPVGTILF), and 408 to 428 (FLALFVVMAMICYFPQLSLLL).

This sequence belongs to the YiaN/YgiK family.

It localises to the cell inner membrane. This is an uncharacterized protein from Salmonella typhimurium (strain LT2 / SGSC1412 / ATCC 700720).